Reading from the N-terminus, the 404-residue chain is Na(+)/H(+) antiporter NhaA 2 (404 aa).

11 consecutive transmembrane segments (helical) span residues 24-44 (GIILLICAIAAIMIANSSFSG), 67-87 (VLHWINDGLMAIFFLVVGMEI), 103-123 (ILPISAAIGGMIVPAIIYALF), 132-152 (GWGIPMATDIAFALGMLSLVA), 161-181 (VFLTALAIVDDLGAIIVIAIF), 184-204 (SQISWIALLLGLIVFATLILA), 216-236 (IILGIILWICLLKSGIHATIA), 266-286 (TPWSSFVIMPIFAFANAGIII), 303-323 (IIFGLFVGKQIGIFGTSFILI), 339-359 (LYGASVFGGIGFTMSIFVSSL), and 372-392 (MCIMIASILAATYGTIVFKFI).

This sequence belongs to the NhaA Na(+)/H(+) (TC 2.A.33) antiporter family.

Its subcellular location is the cell membrane. The catalysed reaction is Na(+)(in) + 2 H(+)(out) = Na(+)(out) + 2 H(+)(in). Functionally, na(+)/H(+) antiporter that extrudes sodium in exchange for external protons. In Clostridium beijerinckii (strain ATCC 51743 / NCIMB 8052) (Clostridium acetobutylicum), this protein is Na(+)/H(+) antiporter NhaA 2.